A 269-amino-acid polypeptide reads, in one-letter code: MKILMSNDDGVYAPGLLALYEALSTMAEVMVVAPNSEQSGCASALSITTPLYTHQLPSGFIAVNGTPADCIYLALNEIYSDTDFDCVITGINSGANLGQDVLFSGTFGAALTAQLFGIPAIATSLVGGGAKSSEQECERHYQMAASEIVKLLTDTPILDICKNLPYHVLNVNIPDVSNADEINGRKMTVLGHRKIARPVHHVVDPRGRDAYWLSLRKRQDIWADNTDHVSSGTTMTDDQAVAAGYISLSPVRLHHTPAATLDMLSALML.

Positions 8, 9, 39, and 92 each coordinate a divalent metal cation.

This sequence belongs to the SurE nucleotidase family. A divalent metal cation serves as cofactor.

It localises to the cytoplasm. It carries out the reaction a ribonucleoside 5'-phosphate + H2O = a ribonucleoside + phosphate. Its function is as follows. Nucleotidase that shows phosphatase activity on nucleoside 5'-monophosphates. The chain is 5'-nucleotidase SurE from Psychrobacter cryohalolentis (strain ATCC BAA-1226 / DSM 17306 / VKM B-2378 / K5).